An 84-amino-acid chain; its full sequence is MGFYMLLTVALLLTSLMNVEATPVDQAERSALEKSGLGNRIQPRYDNCGDAEADCYQSKCMDEETYDEECEASCNYVVANCISD.

The first 21 residues, 1 to 21, serve as a signal peptide directing secretion; sequence MGFYMLLTVALLLTSLMNVEA. Positions 22–39 are excised as a propeptide; that stretch reads TPVDQAERSALEKSGLGN. Cystine bridges form between Cys-48/Cys-70, Cys-55/Cys-74, and Cys-60/Cys-81.

Expressed by the venom duct.

The protein localises to the secreted. The chain is Turripeptide IX-03 from Gemmula speciosa (Splendid gem-turris).